The following is a 532-amino-acid chain: Telomerase Cajal body protein 1 (532 aa).

The disordered stretch occupies residues 1-53 (MKTSEERLLAPDSLPPDLAPAPVPQGSPAEKNTDFEPVPPPCGGDDQPQLATD). Positions 13-25 (SLPPDLAPAPVPQ) are enriched in pro residues. Phosphoserine is present on residues serine 27, serine 61, and serine 83. Residues 80-122 (SELSPGIEEQDVSEHASLPGEETNLPELESGEATEGVSEERAE) form a disordered region. 6 WD repeats span residues 151–190 (RSEN…YSEQ), 206–251 (EGDT…LRAS), 256–297 (NHLD…RDCE), 307–348 (GQSG…ALLG), 349–389 (GHQG…HLLW), and 395–434 (VTTN…SDDS). Position 474 is a phosphothreonine (threonine 474). Phosphoserine is present on serine 476. Positions 510–532 (DPSSPVDDQDEKGQRRTEAVGMS) are disordered. The span at 520–532 (EKGQRRTEAVGMS) shows a compositional bias: basic and acidic residues.

This sequence belongs to the TCAB1 family. As to quaternary structure, component of the telomerase holoenzyme complex composed of one molecule of TERT, one molecule of WRAP53/TCAB1, two molecules of H/ACA ribonucleoprotein complex subunits DKC1, NOP10, NHP2 and GAR1, and a telomerase RNA template component (TERC). The telomerase holoenzyme complex is associated with TEP1, SMG6/EST1A and POT1. Interacts with the chaperonin-containing T-complex (TRiC) complex; which mediates the folding of WRAP53/TCAB1. Interacts with COIL. Interacts with SMN1. Interacts with RNF8. Interacts with histone H2AX. In terms of processing, phosphorylated at Ser-61 by ATM in response to DNA damage, promoting its interaction with histone H2AX and localization to sites of DNA double-strand breaks.

It localises to the nucleus. The protein localises to the cajal body. Its subcellular location is the chromosome. The protein resides in the telomere. Its function is as follows. RNA chaperone that plays a key role in telomere maintenance and RNA localization to Cajal bodies. Specifically recognizes and binds the Cajal body box (CAB box) present in both small Cajal body RNAs (scaRNAs) and telomerase RNA template component (TERC). Essential component of the telomerase holoenzyme complex, a ribonucleoprotein complex essential for the replication of chromosome termini that elongates telomeres in most eukaryotes. In the telomerase holoenzyme complex, required to stimulate the catalytic activity of the complex. Acts by specifically binding the CAB box of the TERC RNA and controlling the folding of the CR4/CR5 region of the TERC RNA, a critical step for telomerase activity. In addition, also controls telomerase holoenzyme complex localization to Cajal body. During S phase, required for delivery of TERC to telomeres during S phase and for telomerase activity. In addition to its role in telomere maintenance, also required for Cajal body formation, probably by mediating localization of scaRNAs to Cajal bodies. Also plays a role in DNA repair: phosphorylated by ATM in response to DNA damage and relocalizes to sites of DNA double-strand breaks to promote the repair of DNA double-strand breaks. Acts by recruiting the ubiquitin ligase RNF8 to DNA breaks and promote both homologous recombination (HR) and non-homologous end joining (NHEJ). This is Telomerase Cajal body protein 1 from Mus musculus (Mouse).